Here is a 138-residue protein sequence, read N- to C-terminus: Transcription antitermination protein NusB (138 aa).

Belongs to the NusB family.

Involved in transcription antitermination. Required for transcription of ribosomal RNA (rRNA) genes. Binds specifically to the boxA antiterminator sequence of the ribosomal RNA (rrn) operons. This chain is Transcription antitermination protein NusB, found in Alkaliphilus oremlandii (strain OhILAs) (Clostridium oremlandii (strain OhILAs)).